The chain runs to 269 residues: Probable membrane transporter protein YfcA (269 aa).

Residues 1–7 (METFNSL) lie on the Periplasmic side of the membrane. The helical transmembrane segment at 8 to 28 (FMVSPLLLGVLFFVAMLAGFI) threads the bilayer. At 29–30 (DS) the chain is on the cytoplasmic side. The chain crosses the membrane as a helical span at residues 31–51 (IAGGGGLLTIPALMAAGMSPA). Residues 52 to 84 (NALATNKLQACGGSISATIYFIRRKVVSLSDQK) are Periplasmic-facing. Residues 85–105 (LNIAMTFVGSMSGALLVQYVQ) form a helical membrane-spanning segment. At 106–111 (ADVLRQ) the chain is on the cytoplasmic side. Residues 112-132 (ILPILVICIGLYFLLMPKLGE) form a helical membrane-spanning segment. At 133–156 (EDRQRRMYGLPFALIAGGCVGFYD) the chain is on the periplasmic side. A helical membrane pass occupies residues 157–177 (GFFGPAAGSFYALAFVTLCGF). The Cytoplasmic segment spans residues 178–197 (NLAKATAHAKLLNATSNIGG). A helical transmembrane segment spans residues 198–218 (LLLFILGGKVIWATGFVMLVG). Topologically, residues 219–269 (QFLGARMGSRLVLSKGQKLIRPMIVIVSAVMSAKLLYDSHGQEILHWLGMN) are periplasmic.

Belongs to the 4-toluene sulfonate uptake permease (TSUP) (TC 2.A.102) family.

It localises to the cell inner membrane. This Escherichia coli O157:H7 protein is Probable membrane transporter protein YfcA (yfcA).